The chain runs to 1088 residues: Leucine-rich repeat receptor-like protein kinase PEPR2 (1088 aa).

Residues 1–26 (MRNLGLLEITLLCSLFVYFRIDSVSS) form the signal peptide. At 27–739 (LNSDGLALLS…QVKLSTWKIA (713 aa)) the chain is on the extracellular side. Residues N55, N82, and N122 are each glycosylated (N-linked (GlcNAc...) asparagine). LRR repeat units follow at residues 75–99 (GNVV…IGEL), 100–122 (KSLV…TLGN), 123–146 (CTSL…IFGS), 147–170 (LQNL…SVGG), 172–194 (IELV…LLGN), 195–219 (CSKL…LYLL), 221–243 (NLGE…SSNC), 244–267 (KKLV…IGNC), 269–291 (SLHS…MGML), 292–315 (RKVS…LGNC), 316–339 (SSLE…LSKL), 341–363 (KLQS…IWKI), 365–387 (SLTQ…VTQL), 388–411 (KHLK…LGLN), 412–435 (RSLE…LCHG), 436–459 (QKLR…IRQC), 460–485 (KTLE…SLSL), 487–506 (YVNL…LGSC), 507–529 (KNLL…ELGN), 530–554 (LQSL…LSGC), 556–577 (RLLY…SFRS), 578–602 (WKSL…LAEL), 603–627 (DRLS…GLLK), 629–651 (LRYG…LGAL), 652–676 (INLE…SLKS), and 678–698 (NQVD…LLSN). 9 N-linked (GlcNAc...) asparagine glycosylation sites follow: N149, N159, N183, N194, N209, N229, N266, N279, and N314. N373 and N411 each carry an N-linked (GlcNAc...) asparagine glycan. Residues N537 and N568 are each glycosylated (N-linked (GlcNAc...) asparagine). N-linked (GlcNAc...) asparagine glycosylation is found at N658 and N698. A helical membrane pass occupies residues 740–760 (LIAAGSSLSVLALLFALFLVL). Over 761–1088 (CRCKRGTKTE…FVRSTSGSVH (328 aa)) the chain is Cytoplasmic. T791 is subject to Phosphothreonine. Residues 794–1080 (LDDKYIIGRG…KDLTDLESFV (287 aa)) enclose the Protein kinase domain. Residues 800 to 808 (IGRGAHGVV) and K822 contribute to the ATP site. A phosphotyrosine mark is found at Y868 and Y908. D921 functions as the Proton acceptor in the catalytic mechanism. Residues Y962 and Y969 each carry the phosphotyrosine modification.

This sequence belongs to the protein kinase superfamily. Ser/Thr protein kinase family. In terms of assembly, interacts with BAK1. Interacts with CLE14.

It localises to the cell membrane. The catalysed reaction is L-seryl-[protein] + ATP = O-phospho-L-seryl-[protein] + ADP + H(+). It catalyses the reaction L-threonyl-[protein] + ATP = O-phospho-L-threonyl-[protein] + ADP + H(+). Its function is as follows. Acts as a receptor for PEP defense peptides. Unlike typical immune receptors, senses an endogenous elicitor that potentiates PAMP-inducible plant responses. This is Leucine-rich repeat receptor-like protein kinase PEPR2 (PEPR2) from Arabidopsis thaliana (Mouse-ear cress).